We begin with the raw amino-acid sequence, 269 residues long: Type II restriction enzyme SfiI (269 aa).

The enzyme catalyses Endonucleolytic cleavage of DNA to give specific double-stranded fragments with terminal 5'-phosphates.. An F and P subtype restriction enzyme that recognizes the double-stranded sequence 5'-GGCCN(5)GGCC-3' and cleaves before N-9. This is Type II restriction enzyme SfiI (sfiIR) from Streptomyces fimbriatus.